Consider the following 101-residue polypeptide: Integration host factor subunit beta (101 aa).

It belongs to the bacterial histone-like protein family. Heterodimer of an alpha and a beta chain.

Its function is as follows. This protein is one of the two subunits of integration host factor, a specific DNA-binding protein that functions in genetic recombination as well as in transcriptional and translational control. The chain is Integration host factor subunit beta from Maricaulis maris (strain MCS10) (Caulobacter maris).